The sequence spans 746 residues: Ferric enterobactin receptor (746 aa).

Residues 1–25 form the signal peptide; the sequence is MSSRALPAVPFLLLSSCLLANAVHA. The TonB box motif lies at 39-44; sequence QTVVAT. The region spanning 47-174 is the TBDR plug domain; it reads EETKQAPGVS…AGGVVNIITK (128 aa). Disordered regions lie at residues 82–102, 235–254, and 397–424; these read VNLTGNSSSGQRGNNRQIDIR, GHESNRTGKQAGTLPAGREG, and QKLDDPSSNTQNTEEGGSIPGLAGKNRS. The segment covering 84–98 has biased composition (polar residues); that stretch reads LTGNSSSGQRGNNRQ. Residues 179 to 746 form the TBDR beta-barrel domain; it reads ETHGNLSVYS…TFYTSLTASF (568 aa). The span at 402-411 shows a compositional bias: polar residues; it reads PSSNTQNTEE. Positions 729 to 746 match the TonB C-terminal box motif; the sequence is ATYNEPGRTFYTSLTASF.

This sequence belongs to the TonB-dependent receptor family.

The protein resides in the cell outer membrane. Functionally, specific receptor for the siderophore ferric enterobactin. This chain is Ferric enterobactin receptor (pfeA), found in Pseudomonas aeruginosa (strain ATCC 15692 / DSM 22644 / CIP 104116 / JCM 14847 / LMG 12228 / 1C / PRS 101 / PAO1).